The sequence spans 316 residues: MTNFKLKIASRRSKLAMVQTLWVKDQLEKNIPNLEVSIEAMATQGDKILDVALAKIGDKGLFTKELEAQMLVGQADIAVHSLKDLPTNLPSGLKLGCITKREDPADALVVSKKNDCYKLETLPAGSIVGTSSLRRLAQLRNKYPHLNFKDIRGNVITRIEKLDAGEFDCIILAAAGLKRLGFESRIHQIIPNEISLHAVGQGALGIECKSDDKKVLEIISVLEDKPTSQRCLAERAFLRELEGGCQVPIGVNSSIQNEQLYLTGMVASLDGERLIKDQYIGNIDDPEQVGKELAKKLKLQGADKILSEIFEQFREN.

The residue at position 245 (cysteine 245) is an S-(dipyrrolylmethanemethyl)cysteine.

The protein belongs to the HMBS family. As to quaternary structure, monomer. The cofactor is dipyrromethane.

It catalyses the reaction 4 porphobilinogen + H2O = hydroxymethylbilane + 4 NH4(+). The protein operates within porphyrin-containing compound metabolism; protoporphyrin-IX biosynthesis; coproporphyrinogen-III from 5-aminolevulinate: step 2/4. It participates in porphyrin-containing compound metabolism; chlorophyll biosynthesis. Its function is as follows. Tetrapolymerization of the monopyrrole PBG into the hydroxymethylbilane pre-uroporphyrinogen in several discrete steps. This chain is Porphobilinogen deaminase, found in Prochlorococcus marinus (strain MIT 9312).